Here is a 395-residue protein sequence, read N- to C-terminus: Putative pyridoxal phosphate-dependent acyltransferase (395 aa).

110-111 (GF) is a binding site for pyridoxal 5'-phosphate. His135 is a binding site for substrate. Residues Ser185, 210 to 213 (DDAH), and 240 to 243 (TLSK) contribute to the pyridoxal 5'-phosphate site. Residue Lys243 is modified to N6-(pyridoxal phosphate)lysine. Residue Thr357 coordinates substrate.

It belongs to the class-II pyridoxal-phosphate-dependent aminotransferase family. In terms of assembly, homodimer. Pyridoxal 5'-phosphate serves as cofactor.

In Staphylococcus aureus (strain COL), this protein is Putative pyridoxal phosphate-dependent acyltransferase.